Reading from the N-terminus, the 192-residue chain is uncharacterized protein (192 aa).

In terms of domain architecture, Nudix hydrolase spans 29 to 160 (HRQAAVLIPI…PLDIYRRGDS (132 aa)). Positions 67-89 (GAVDDTDASVIAAALREAEEEVA) match the Nudix box motif. E83 and E87 together coordinate Mg(2+).

This sequence belongs to the Nudix hydrolase family. PCD1 subfamily. Mn(2+) serves as cofactor. The cofactor is Mg(2+).

Probably mediates the hydrolysis of some nucleoside diphosphate derivatives. This is an uncharacterized protein from Shigella sonnei (strain Ss046).